A 118-amino-acid polypeptide reads, in one-letter code: Putative pterin-4-alpha-carbinolamine dehydratase (118 aa).

It belongs to the pterin-4-alpha-carbinolamine dehydratase family.

The enzyme catalyses (4aS,6R)-4a-hydroxy-L-erythro-5,6,7,8-tetrahydrobiopterin = (6R)-L-erythro-6,7-dihydrobiopterin + H2O. The chain is Putative pterin-4-alpha-carbinolamine dehydratase from Pseudomonas putida (strain GB-1).